A 295-amino-acid polypeptide reads, in one-letter code: Protein NEOXANTHIN-DEFICIENT 1 (295 aa).

The tract at residues 221–251 (PAKVSGPSESDADKENSSEDQSSNVESVSRV) is disordered.

In terms of biological role, required for neoxanthin biosynthesis. Probably not involved directly in the enzymatic conversion of violaxanthin to neoxanthin. Is necessary but not sufficient for neoxanthin synthesis. Seems not required for abscisic acid (ABA) biosynthesis in response to drought stress. The chain is Protein NEOXANTHIN-DEFICIENT 1 from Solanum lycopersicum (Tomato).